Consider the following 151-residue polypeptide: Ubiquitin-conjugating enzyme E2 2 (151 aa).

The region spanning 4-150 (AARRRLMRDF…VRETVEKSWE (147 aa)) is the UBC core domain. The active-site Glycyl thioester intermediate is Cys88.

This sequence belongs to the ubiquitin-conjugating enzyme family.

It localises to the cytoplasm. Its subcellular location is the nucleus. The catalysed reaction is S-ubiquitinyl-[E1 ubiquitin-activating enzyme]-L-cysteine + [E2 ubiquitin-conjugating enzyme]-L-cysteine = [E1 ubiquitin-activating enzyme]-L-cysteine + S-ubiquitinyl-[E2 ubiquitin-conjugating enzyme]-L-cysteine.. It functions in the pathway protein modification; protein ubiquitination. In terms of biological role, catalyzes the covalent attachment of ubiquitin to other proteins. Plays a role in transcription regulation by catalyzing the monoubiquitination of histone H2B to form H2BK123ub1. H2BK123ub1 gives a specific tag for epigenetic transcriptional activation and is also a prerequisite for H3K4me and H3K79me formation. Also involved in postreplication repair of UV-damaged DNA, in N-end rule-dependent protein degradation and in sporulation. The polypeptide is Ubiquitin-conjugating enzyme E2 2 (mus-8) (Neurospora crassa (strain ATCC 24698 / 74-OR23-1A / CBS 708.71 / DSM 1257 / FGSC 987)).